The following is a 337-amino-acid chain: Tetraacyldisaccharide 4'-kinase (337 aa).

55–62 (NAGGTGKT) contributes to the ATP binding site.

The protein belongs to the LpxK family.

The catalysed reaction is a lipid A disaccharide + ATP = a lipid IVA + ADP + H(+). The protein operates within glycolipid biosynthesis; lipid IV(A) biosynthesis; lipid IV(A) from (3R)-3-hydroxytetradecanoyl-[acyl-carrier-protein] and UDP-N-acetyl-alpha-D-glucosamine: step 6/6. Transfers the gamma-phosphate of ATP to the 4'-position of a tetraacyldisaccharide 1-phosphate intermediate (termed DS-1-P) to form tetraacyldisaccharide 1,4'-bis-phosphate (lipid IVA). This Dinoroseobacter shibae (strain DSM 16493 / NCIMB 14021 / DFL 12) protein is Tetraacyldisaccharide 4'-kinase.